The primary structure comprises 1776 residues: TOG array regulator of axonemal microtubules protein 1 (1776 aa).

TOG regions lie at residues 94 to 311 and 351 to 595; these read EEET…RRLE and PQEL…MPSS. HEAT repeat units lie at residues 175–212, 214–246, 250–288, 344–383, 389–426, 430–465, 466–503, and 505–542; these read AFSL…RSSG, VLRT…PEDL, LDLT…RLGQ, NLKF…KFNP, ASLV…RLGE, QFLG…MKEV, GPQR…YPSE, and FDLP…SMGS. Disordered stretches follow at residues 655–676, 817–921, 970–1000, and 1062–1084; these read KNKL…TSNS, ILPS…RGIN, HSSL…DSPD, and TRLS…GFTR. 3 stretches are compositionally biased toward polar residues: residues 826 to 836, 845 to 855, and 871 to 892; these read PRTSPKHTSPL, DNSISFSNSWP, and LANQ…TAVQ. A compositionally biased stretch (low complexity) spans 988 to 1000; the sequence is SGSSSTSDVDSPD. The interval 1259–1481 is TOG 3; sequence DIALTEALRL…YIKESVKNLR (223 aa). HEAT repeat units follow at residues 1297–1334 and 1338–1375; these read TKLH…YLKK and QELD…NVTP. Residues 1493–1536 form a disordered region; that stretch reads ASAKGRRSHPGSVGNTRSSSVSRDAFSSSEREVTEVREVPRKSA. Over residues 1509–1520 the composition is skewed to low complexity; it reads RSSSVSRDAFSS. The span at 1521-1533 shows a compositional bias: basic and acidic residues; it reads SEREVTEVREVPR. The TOG 4 stretch occupies residues 1540–1776; it reads SLESAEYIKV…LLDVTVLSEL (237 aa). 3 HEAT repeats span residues 1541 to 1578, 1582 to 1619, and 1623 to 1661; these read LESA…NNQE, GNIV…LLRD, and PIIN…HVDN.

The protein belongs to the Crescerin family. Interacts with ARMC9. Interacts with CCDC66, CEP104 and CSPP1.

Its subcellular location is the cell projection. It is found in the cilium. It localises to the cytoplasm. The protein localises to the cytoskeleton. The protein resides in the cilium axoneme. Functionally, involved in ciliogenesis. It is required for appropriate acetylation and polyglutamylation of ciliary microtubules, and regulation of cilium length. Interacts with microtubules and promotes microtubule polymerization via its HEAT repeat domains, especially those in TOG region 2 and 4. The protein is TOG array regulator of axonemal microtubules protein 1 (Togaram1) of Mus musculus (Mouse).